The primary structure comprises 542 residues: MAAAVGGLTTCFARPTPEFIAPSTSYSAPVRVFFKPFKVRDLCCAGEVVGVLSARSIPISPRFELIRLVRMQPGLSALELLKTSSVNRYTKERISIVVIGLNVHTAPVELREKLAIPEAQWPPGIGELCALNHIEEAAVLSTCNRIEIYVVALSQHRGVKEVTEWMSKRSGIPISELCKHRVLLYNTDATQHLFEVSAGLDSLVLGEGQILAQVKHVVKTGQGVAGFDRKISGLFKHAITVGKRVRTETNISSGSFSVSSAAVELAQKKLPESSYATAKVMVVGAGKMGKLVIKHLVAKGCRKMVVVNRTQDSVDAVEELKDVEIIYKPLSKILACASEADVIFTCTASKTPLFTKEHVAMLPPAGTETGRRLFVDISVPRNVEQRVSDLETVSVFNVDDLKEVVAANKEDRLKKVQEAQSIIGEEINKFEAWRDSLETVPTIKKFRAYVERIRAAELDKCLSKMGEDIPKKKKVAINDLSLGIANKLLHGPIQHLRCDGNDSRTLDEILQNMHAINRMFDLETDLSVLEEKIRAKVERGQK.

Substrate-binding positions include 142–145 (TCNR), serine 202, 207–209 (EGQ), and glutamine 213. Catalysis depends on cysteine 143, which acts as the Nucleophile. Residue 284–289 (GAGKMG) participates in NADP(+) binding.

This sequence belongs to the glutamyl-tRNA reductase family. Found in all tissues examined.

The protein localises to the plastid. It is found in the chloroplast. The enzyme catalyses (S)-4-amino-5-oxopentanoate + tRNA(Glu) + NADP(+) = L-glutamyl-tRNA(Glu) + NADPH + H(+). It functions in the pathway porphyrin-containing compound metabolism; protoporphyrin-IX biosynthesis; 5-aminolevulinate from L-glutamyl-tRNA(Glu): step 1/2. Its function is as follows. Catalyzes the NADPH-dependent reduction of glutamyl-tRNA(Glu) to glutamate 1-semialdehyde (GSA). The polypeptide is Glutamyl-tRNA reductase 2, chloroplastic (HEMA2) (Cucumis sativus (Cucumber)).